A 340-amino-acid polypeptide reads, in one-letter code: 3-isopropylmalate dehydrogenase (340 aa).

4 residues coordinate substrate: R88, R98, R122, and D212. Residues D212, D236, and D240 each contribute to the Mg(2+) site. NAD(+) is bound at residue G272–D284.

Belongs to the isocitrate and isopropylmalate dehydrogenases family. LeuB type 2 subfamily. As to quaternary structure, homodimer. Mg(2+) is required as a cofactor. Requires Mn(2+) as cofactor.

It is found in the cytoplasm. It carries out the reaction (2R,3S)-3-isopropylmalate + NAD(+) = 4-methyl-2-oxopentanoate + CO2 + NADH. It participates in amino-acid biosynthesis; L-leucine biosynthesis; L-leucine from 3-methyl-2-oxobutanoate: step 3/4. Its function is as follows. Catalyzes the oxidation of 3-carboxy-2-hydroxy-4-methylpentanoate (3-isopropylmalate) to 3-carboxy-4-methyl-2-oxopentanoate. The product decarboxylates to 4-methyl-2 oxopentanoate. This is 3-isopropylmalate dehydrogenase from Corynebacterium efficiens (strain DSM 44549 / YS-314 / AJ 12310 / JCM 11189 / NBRC 100395).